Here is a 359-residue protein sequence, read N- to C-terminus: Probable RNA methyltransferase RPD_2859 (359 aa).

The Proton acceptor role is filled by Glu-99. One can recognise a Radical SAM core domain in the interval 105-330; sequence RFDGHTACIS…PVVVRDTQGR (226 aa). The cysteines at positions 112 and 336 are disulfide-linked. The [4Fe-4S] cluster site is built by Cys-119, Cys-123, and Cys-126. S-adenosyl-L-methionine contacts are provided by residues 162–163, Ser-194, 217–219, and Asn-293; these read GE and SLH. The active-site S-methylcysteine intermediate is the Cys-336.

The protein belongs to the radical SAM superfamily. RlmN family. It depends on [4Fe-4S] cluster as a cofactor.

Its subcellular location is the cytoplasm. The protein is Probable RNA methyltransferase RPD_2859 of Rhodopseudomonas palustris (strain BisB5).